A 95-amino-acid polypeptide reads, in one-letter code: Protein TusB (95 aa).

The protein belongs to the DsrH/TusB family. Heterohexamer, formed by a dimer of trimers. The hexameric TusBCD complex contains 2 copies each of TusB, TusC and TusD. The TusBCD complex interacts with TusE.

It localises to the cytoplasm. Part of a sulfur-relay system required for 2-thiolation of 5-methylaminomethyl-2-thiouridine (mnm(5)s(2)U) at tRNA wobble positions. The protein is Protein TusB of Klebsiella pneumoniae (strain 342).